Consider the following 119-residue polypeptide: Ribosome-binding factor A (119 aa).

Belongs to the RbfA family. As to quaternary structure, monomer. Binds 30S ribosomal subunits, but not 50S ribosomal subunits or 70S ribosomes.

It localises to the cytoplasm. Its function is as follows. One of several proteins that assist in the late maturation steps of the functional core of the 30S ribosomal subunit. Associates with free 30S ribosomal subunits (but not with 30S subunits that are part of 70S ribosomes or polysomes). Required for efficient processing of 16S rRNA. May interact with the 5'-terminal helix region of 16S rRNA. This Pseudothermotoga lettingae (strain ATCC BAA-301 / DSM 14385 / NBRC 107922 / TMO) (Thermotoga lettingae) protein is Ribosome-binding factor A.